The chain runs to 535 residues: Nuclear/nucleolar GTPase 2 (535 aa).

A disordered region spans residues 1 to 42 (MAKKKERAVNVSGKPRHSLDVNRANDKKGAGGGAGGGGGGRS). Residues 17-29 (HSLDVNRANDKKG) are compositionally biased toward basic and acidic residues. Over residues 30–41 (AGGGAGGGGGGR) the composition is skewed to gly residues. Positions 213-374 (WGELYKVIDS…LIDCPGVVYQ (162 aa)) constitute a CP-type G domain. The segment at 261–264 (NKCD) is G4. Positions 290–292 (SIN) are G5. Residues 323–330 (GYPNVGKS) form a G1 region. The interval 349–353 (GETKV) is G2. Residues 367–370 (DCPG) are G3. A disordered region spans residues 464 to 494 (FFVPPPQQGEDSPSETAEPVEKSDEEGVSSD).

It belongs to the TRAFAC class YlqF/YawG GTPase family. RsgA subfamily. In terms of assembly, interacts (via N-terminus) with the 60S ribosomal proteins RPL10A. This interaction is enhanced by the addition of GTP. In terms of tissue distribution, expressed in roots, shoot apical meristem, leaves, leaf sheaths and flowers.

It is found in the nucleus. The protein localises to the nucleolus. The GTPase activity is stimulated in the presence of ribosomes, particularly of the 60S subunit. GTPase involved in pre-60S ribosomal subunit maturation. The sequence is that of Nuclear/nucleolar GTPase 2 from Oryza sativa subsp. japonica (Rice).